The primary structure comprises 397 residues: Multidrug resistance protein MdtH (397 aa).

The next 10 membrane-spanning stretches (helical) occupy residues 11-31 (WFLA…MPMI), 71-91 (FGAR…FASL), 94-114 (AQSG…GCLF), 137-157 (LLMM…SWLL), 163-183 (YVCL…LLIL), 211-231 (LVLI…IFPI), 242-262 (AVGW…YPLA), 291-311 (FATT…GIVI), 338-358 (LGLA…HDYA), and 366-386 (LPWL…VNCF).

Belongs to the major facilitator superfamily. DHA1 family. MdtH (TC 2.A.1.2.21) subfamily.

It localises to the cell inner membrane. This chain is Multidrug resistance protein MdtH, found in Aeromonas salmonicida (strain A449).